The following is a 234-amino-acid chain: Ubiquitin thioesterase OTUB2 (234 aa).

One can recognise an OTU domain in the interval 40–231 (TSIRKTKGDG…TSHYNILYAA (192 aa)). Asp-48 is a catalytic residue. Catalysis depends on Cys-51, which acts as the Nucleophile. Residues His-205 and His-224 contribute to the active site.

Belongs to the peptidase C65 family.

The catalysed reaction is Thiol-dependent hydrolysis of ester, thioester, amide, peptide and isopeptide bonds formed by the C-terminal Gly of ubiquitin (a 76-residue protein attached to proteins as an intracellular targeting signal).. Its function is as follows. Hydrolase that can remove conjugated ubiquitin from proteins in vitro and may therefore play an important regulatory role at the level of protein turnover by preventing degradation. Mediates deubiquitination of 'Lys-11'-,'Lys-48'- and 'Lys-63'-linked polyubiquitin chains, with a preference for 'Lys-63'-linked polyubiquitin chains. The sequence is that of Ubiquitin thioesterase OTUB2 (Otub2) from Mus musculus (Mouse).